The chain runs to 288 residues: 33 kDa chaperonin (288 aa).

Cystine bridges form between Cys-236/Cys-238 and Cys-269/Cys-272.

Belongs to the HSP33 family. Under oxidizing conditions two disulfide bonds are formed involving the reactive cysteines. Under reducing conditions zinc is bound to the reactive cysteines and the protein is inactive.

The protein resides in the cytoplasm. Functionally, redox regulated molecular chaperone. Protects both thermally unfolding and oxidatively damaged proteins from irreversible aggregation. Plays an important role in the bacterial defense system toward oxidative stress. This Lactococcus lactis subsp. cremoris (strain SK11) protein is 33 kDa chaperonin.